The chain runs to 132 residues: UPF0719 inner membrane protein YjfL (132 aa).

Residues M1–S6 are Periplasmic-facing. The helical transmembrane segment at L7–I27 threads the bilayer. Over Y28–A46 the chain is Cytoplasmic. Residues A47–I67 traverse the membrane as a helical segment. Topologically, residues N68–S71 are periplasmic. A helical membrane pass occupies residues I72–G92. Topologically, residues V93–T109 are cytoplasmic. Residues A110 to M130 traverse the membrane as a helical segment. At T131 to W132 the chain is on the periplasmic side.

The protein belongs to the UPF0719 family.

The protein resides in the cell inner membrane. This Escherichia coli O157:H7 protein is UPF0719 inner membrane protein YjfL (yjfL).